The chain runs to 93 residues: Alpha-elapitoxin-Oh3a (93 aa).

The N-terminal stretch at 1-21 is a signal peptide; sequence MKTLLLTLVVVTIVCLDLGYT. Disulfide bonds link C24–C42, C35–C63, C48–C52, C67–C78, and C79–C84.

Belongs to the three-finger toxin family. Long-chain subfamily. Type II alpha-neurotoxin sub-subfamily. Expressed by the venom gland.

It is found in the secreted. Functionally, binds to muscular and neuronal nicotinic acetylcholine receptor (nAChR) and inhibits acetylcholine from binding to the receptor, thereby impairing neuromuscular and neuronal transmission. Pseudo-irreversibly inhibits twitches in chick biventer cervicis nerve-muscle preparations in a concentration-dependent manner. This chain is Alpha-elapitoxin-Oh3a, found in Ophiophagus hannah (King cobra).